The primary structure comprises 265 residues: Hydroxyethylthiazole kinase 2 (265 aa).

Position 39 (Met39) interacts with substrate. Lys115 and Thr168 together coordinate ATP. Gly195 is a binding site for substrate.

It belongs to the Thz kinase family. Mg(2+) is required as a cofactor.

The enzyme catalyses 5-(2-hydroxyethyl)-4-methylthiazole + ATP = 4-methyl-5-(2-phosphooxyethyl)-thiazole + ADP + H(+). It participates in cofactor biosynthesis; thiamine diphosphate biosynthesis; 4-methyl-5-(2-phosphoethyl)-thiazole from 5-(2-hydroxyethyl)-4-methylthiazole: step 1/1. Its function is as follows. Catalyzes the phosphorylation of the hydroxyl group of 4-methyl-5-beta-hydroxyethylthiazole (THZ). The polypeptide is Hydroxyethylthiazole kinase 2 (Clostridium botulinum (strain Langeland / NCTC 10281 / Type F)).